The sequence spans 279 residues: MAMLSFEKKYRVRGGTLVGGDLFDFWVGPFYVGFFGVTTLFFSVLGTALIIWGASQGPTWNLWQISIAPPDLKYGLGVAPLMEGGLWQIITVCAIGAFVSWALREVEICRKLGMQYHVPIAFSFAILAYVTLVVIRPILMGAWGHGFPYGIFSHLDWVSNVGYQYLHFHYNPAHMLAITFFFTTTLAMSMHGGLILSAANPKKGEPMKTTDHEDTFFRDAVGYSIGSLGIHRLGLFLALSAAFWSAVCIVISGPFWTRGWPEWWGWWLNLPIWSQWPLK.

3 helical membrane-spanning segments follow: residues 33–56, 85–113, and 116–141; these read GFFG…GASQ, GLWQ…RKLG, and YHVP…ILMG. (7R,8Z)-bacteriochlorophyll b-binding residues include His-154 and His-174. The chain crosses the membrane as a helical span at residues 171–200; it reads NPAHMLAITFFFTTTLAMSMHGGLILSAAN. Position 191 (His-191) interacts with Fe cation. Phe-217 contributes to the a ubiquinone binding site. A helical transmembrane segment spans residues 226-252; it reads GSLGIHRLGLFLALSAAFWSAVCIVIS. His-231 serves as a coordination point for Fe cation.

The protein belongs to the reaction center PufL/M/PsbA/D family. As to quaternary structure, reaction center is composed of four bacteriochlorophylls, two bacteriopheophytins, two ubiquinones, one iron, and three highly hydrophobic polypeptide chains (designated L, M, and H).

It localises to the cell inner membrane. Its function is as follows. The reaction center is a membrane-bound complex that mediates the initial photochemical event in the electron transfer process of photosynthesis. The sequence is that of Reaction center protein L chain (pufL) from Rubrivivax gelatinosus (strain NBRC 100245 / IL144).